Reading from the N-terminus, the 478-residue chain is Protein nucleotidyltransferase YdiU (478 aa).

ATP contacts are provided by glycine 84, glycine 86, arginine 87, lysine 107, aspartate 119, glycine 120, arginine 170, and arginine 177. The Proton acceptor role is filled by aspartate 246. 2 residues coordinate Mg(2+): asparagine 247 and aspartate 256. ATP is bound at residue aspartate 256.

It belongs to the SELO family. Mg(2+) serves as cofactor. Requires Mn(2+) as cofactor.

It catalyses the reaction L-seryl-[protein] + ATP = 3-O-(5'-adenylyl)-L-seryl-[protein] + diphosphate. It carries out the reaction L-threonyl-[protein] + ATP = 3-O-(5'-adenylyl)-L-threonyl-[protein] + diphosphate. The catalysed reaction is L-tyrosyl-[protein] + ATP = O-(5'-adenylyl)-L-tyrosyl-[protein] + diphosphate. The enzyme catalyses L-histidyl-[protein] + UTP = N(tele)-(5'-uridylyl)-L-histidyl-[protein] + diphosphate. It catalyses the reaction L-seryl-[protein] + UTP = O-(5'-uridylyl)-L-seryl-[protein] + diphosphate. It carries out the reaction L-tyrosyl-[protein] + UTP = O-(5'-uridylyl)-L-tyrosyl-[protein] + diphosphate. In terms of biological role, nucleotidyltransferase involved in the post-translational modification of proteins. It can catalyze the addition of adenosine monophosphate (AMP) or uridine monophosphate (UMP) to a protein, resulting in modifications known as AMPylation and UMPylation. The protein is Protein nucleotidyltransferase YdiU of Escherichia coli O127:H6 (strain E2348/69 / EPEC).